The sequence spans 140 residues: uncharacterized protein (140 aa).

A compositionally biased stretch (basic and acidic residues) spans 1–15 (MQRQTGHMEDKKRTG). The segment at 1 to 34 (MQRQTGHMEDKKRTGLESQGTENAFSDGRDGKDG) is disordered.

This is an uncharacterized protein from Gallus gallus (Chicken).